A 173-amino-acid polypeptide reads, in one-letter code: Atrial gland and califin peptides (173 aa).

An N-terminal signal peptide occupies residues 1-21 (MKANTMFIILCLSLSTLCVSS). Residues 22-34 (QSTSVHGKIFVPN) constitute a propeptide that is removed on maturation. Isoleucine 69 is subject to Isoleucine amide. A propeptide spanning residues 73–114 (AAGEMEQSEGQNPETKSHSWRKRSVLTPSLSSLGESLESGIS) is cleaved from the precursor. Residues 75–94 (GEMEQSEGQNPETKSHSWRK) are disordered. An intrachain disulfide couples cysteine 141 to cysteine 172. Leucine 152 bears the Leucine amide mark.

This sequence belongs to the molluscan ELH family. Califin A consists of a 36-residue large subunit bound by a single disulfide bond to a 18-residue small subunit.

It is found in the secreted. Functionally, the atrial gland peptide A and peptide B precursors are the source of the 2 peptides that, upon release from this reproductive system gland, initiate the egg-laying process by exciting the bag cell neurons. These neurons, clustered in neural connectives near the abdominal ganglion, in turn release other peptides that act directly on the ganglion and also, via the circulating hemolymph, on many other organs to control the physiological processes of egg-laying. One of these other peptides is the egg-laying hormone. Its function is as follows. Injected in sexually mature animals califin A excites LB and LC cells of the abdominal ganglion and causes egg-laying. This Aplysia californica (California sea hare) protein is Atrial gland and califin peptides.